The primary structure comprises 327 residues: Homeotic protein distal-less (327 aa).

Residues 124 to 183 constitute a DNA-binding region (homeobox); the sequence is MRKPRTIYSSLQLQQLNRRFQRTQYLALPERAELAASLGLTQTQVKIWFQNRRSKYKKMM. The interval 181-303 is disordered; that stretch reads KMMKAAQGPG…THHHNPPPQM (123 aa). Residues 231-249 show a composition bias toward low complexity; it reads LPPGHSPTPSSTPVSELSP. Positions 266–275 are enriched in basic and acidic residues; that stretch reads QKPHWIDHKP. The span at 276–286 shows a compositional bias: pro residues; it reads PPQMTPQPPHP.

As to expression, expressed in the embryo in limb primordia of the head and thoracic segments. Expressed in regions of the larval leg, wing, antennal and haltere disks that form the distal-most regions of the mature structures (in the leg this corresponds to the tarsus and the distal tibia). Found in the optic center of the developing larval brain.

Its subcellular location is the nucleus. Functionally, transcription factor that plays a role in larval and adult appendage development. Specifies the identity of ventral appendages (including legs and antennae) and suppresses dorsal appendage development. Involved in patterning the distal-proximal limb axis. May control the adhesive properties of cells during limb morphogenesis. Also has a secondary role in the normal patterning of the wing margin. The protein is Homeotic protein distal-less (Dll) of Drosophila melanogaster (Fruit fly).